Consider the following 241-residue polypeptide: MGQKIHPIGFRLGVTKEHKSCWYADKRRYPELLQEDLAIRQHVEKNLSNAGIADIRIERKADQIDLAIHTARPGVVVGRGGSGIEQLRTGLQQTLGENRQIRINVIEVSRVDADAALIAEYITQQLERRVSFRRVVRQAIQRAQRAEVKGIKIQVGGRLNGAEIARTEWVREGRVPLHTLRADIDYAYRTAQTIYGILGVKVWVFKGEIIPGQDEQAMAAPAPTPRKKRRPQQFEDRSNEE.

One can recognise a KH type-2 domain in the interval 39–109 (IRQHVEKNLS…QIRINVIEVS (71 aa)). The disordered stretch occupies residues 215-241 (EQAMAAPAPTPRKKRRPQQFEDRSNEE). Basic and acidic residues predominate over residues 232–241 (QQFEDRSNEE).

The protein belongs to the universal ribosomal protein uS3 family. As to quaternary structure, part of the 30S ribosomal subunit. Forms a tight complex with proteins S10 and S14.

Its function is as follows. Binds the lower part of the 30S subunit head. Binds mRNA in the 70S ribosome, positioning it for translation. The polypeptide is Small ribosomal subunit protein uS3 (Crocosphaera subtropica (strain ATCC 51142 / BH68) (Cyanothece sp. (strain ATCC 51142))).